Here is a 2449-residue protein sequence, read N- to C-terminus: Nonribisomal peptide synthetase phqB (2449 aa).

The adenylation 1 stretch occupies residues 253-654 (IQVHSGPGRL…GRRDTVVKIR (402 aa)). In terms of domain architecture, Carrier 1 spans 795-870 (LPMTPNEDVL…LRTVAKEARP (76 aa)). The residue at position 815 (S815) is an O-(pantetheine 4'-phosphoryl)serine. The segment at 913–1337 (QDIYPTTPLQ…LISDRDSELL (425 aa)) is condensation 1. Positions 1357–1756 (EAQVTRNPSK…TFTFLGRTNQ (400 aa)) are adenylation 2. Positions 1915-1993 (WALSKHIGQL…MVAEMIDRTP (79 aa)) constitute a Carrier 2 domain. At S1952 the chain carries O-(pantetheine 4'-phosphoryl)serine. Residues 2041-2297 (LTGATGFLGT…VAAVDWVASL (257 aa)) form a reductase (R) domain region. Residues T2045, M2249, and N2259 each contribute to the NADPH site.

Belongs to the NRP synthetase family.

The protein operates within alkaloid biosynthesis. Its function is as follows. Nonribisomal peptide synthetase; part of the gene cluster that mediates the biosynthesis of paraherquamide, a fungal indole alkaloid that belongs to a family of natural products containing a characteristic bicyclo[2.2.2]diazaoctane core. The first steps in the biosynthesis of paraherquamide is the production of the beta-methyl-proline precursor from L-isoleucine. They require oxidation of a terminally hydroxylated L-isoleucine to the corresponding aldehyde by enzymes which have still to be identified. Spontaneous cyclization and dehydration would yield the 4-methyl pyrolline-5-carboxylic acid, which is then reduced by the pyrroline-5-carboxylate reductase phqD leading to the beta-methyl-proline precursor. The next step of paraherquamide biosynthesis involves coupling of beta-methyl-proline and L-tryptophan by the bimodular NRPS phqB, to produce a monooxopiperazine intermediate. The reductase (R) domain of phqB utilizes NADPH for hydride transfer to reduce the thioester bond of the T domain-tethered linear dipeptide to a hemithioaminal intermediate, which spontaneously cleaves the C-S bond to release the aldehyde product. This compound undergoes spontaneous cyclization and dehydration to give a dienamine which is reverse prenylated at C-2 by the reverse prenyltransferase phqJ. The other prenyltransferase present in the cluster, phqI may be a redundant gene in the pathway. During biosynthetic assembly, the key step to produce the polycyclic core is catalyzed by the bifunctional reductase and intramolecular [4+2] Diels-Alderase, phqE, resulting in formation of the [2.2.2] diazaoctane intermediate preparaherquamide. Following formation of preparaherquamide, an indole 2,3-epoxidation-initiated pinacol-like rearrangement is catalyzed by the phqK FAD-dependent monooxygenase. The prenyltransferase phqA, the cytochrome P450 monooxygenase phqL, and the FAD-linked oxidoreductase phqH (or the cytochrome P450 monooxygenase phqM), are proposed to be involved in the formation of the pyran ring. The FAD-dependent monooxygenase phqK is likely responsible for generation of the spiro-oxindole, and the N-methylation is likely mediated by the phqN methyltransferase leading to the isolable natural product paraherquamide F. However, the order of these biosynthetic steps has still to be determined. In late-stage paraherquamide biosynthesis, the third P450 monooxygenase, phqO, is probably responsible for the C-14 hydroxylation, transforming paraherquamide F to paraherquamide G, and paraherquamide E to the final product paraherquamide A. The expansion from the 6-membered ring pyran (in paraherquamides F and G) to the 7-membered dioxepin ring (in paraherquamides A and E) represents a poorly understood but intriguing process that probably involves the 2-oxoglutarate-dependent dioxygenase phqC. Finally, the remaining members of the paraherquamide cluster, including phqI as well as phqM (or phqH), do not have a clearly prescribed role and appear to be redundant. This Penicillium fellutanum protein is Nonribisomal peptide synthetase phqB.